A 208-amino-acid polypeptide reads, in one-letter code: Thymidylate kinase (208 aa).

Gly-11–Ser-18 serves as a coordination point for ATP.

Belongs to the thymidylate kinase family.

It carries out the reaction dTMP + ATP = dTDP + ADP. Phosphorylation of dTMP to form dTDP in both de novo and salvage pathways of dTTP synthesis. This is Thymidylate kinase from Methylococcus capsulatus (strain ATCC 33009 / NCIMB 11132 / Bath).